The primary structure comprises 552 residues: ATP synthase subunit alpha, mitochondrial (552 aa).

The transit peptide at 1-47 directs the protein to the mitochondrion; sequence MSIFSARLASSVARNLPKAANQVACKAAYPAASLAARKLHVASTQRS. 211–218 is an ATP binding site; the sequence is GDRQTGKT.

It belongs to the ATPase alpha/beta chains family. In terms of assembly, F-type ATPases have 2 components, CF(1) - the catalytic core - and CF(0) - the membrane proton channel. CF(1) has five subunits: alpha(3), beta(3), gamma(1), delta(1), epsilon(1). CF(0) has three main subunits: a, b and c.

It is found in the mitochondrion inner membrane. Its function is as follows. Mitochondrial membrane ATP synthase (F(1)F(0) ATP synthase or Complex V) produces ATP from ADP in the presence of a proton gradient across the membrane which is generated by electron transport complexes of the respiratory chain. F-type ATPases consist of two structural domains, F(1) - containing the extramembraneous catalytic core, and F(0) - containing the membrane proton channel, linked together by a central stalk and a peripheral stalk. During catalysis, ATP synthesis in the catalytic domain of F(1) is coupled via a rotary mechanism of the central stalk subunits to proton translocation. Subunits alpha and beta form the catalytic core in F(1). Rotation of the central stalk against the surrounding alpha(3)beta(3) subunits leads to hydrolysis of ATP in three separate catalytic sites on the beta subunits. Subunit alpha does not bear the catalytic high-affinity ATP-binding sites. The polypeptide is ATP synthase subunit alpha, mitochondrial (blw) (Drosophila melanogaster (Fruit fly)).